The chain runs to 282 residues: tRNA U34 carboxymethyltransferase (282 aa).

Carboxy-S-adenosyl-L-methionine-binding positions include lysine 54, tryptophan 68, lysine 73, glycine 92, 114–116 (DPS), tyrosine 161, and arginine 276.

This sequence belongs to the class I-like SAM-binding methyltransferase superfamily. CmoB family. As to quaternary structure, homotetramer.

The catalysed reaction is carboxy-S-adenosyl-L-methionine + 5-hydroxyuridine(34) in tRNA = 5-carboxymethoxyuridine(34) in tRNA + S-adenosyl-L-homocysteine + H(+). Its function is as follows. Catalyzes carboxymethyl transfer from carboxy-S-adenosyl-L-methionine (Cx-SAM) to 5-hydroxyuridine (ho5U) to form 5-carboxymethoxyuridine (cmo5U) at position 34 in tRNAs. The sequence is that of tRNA U34 carboxymethyltransferase from Campylobacter fetus subsp. fetus (strain 82-40).